The primary structure comprises 193 residues: Protein PrsJ (193 aa).

Positions 1 to 27 (MVVNKTTAVLYLIALSLSGFIHTFLRA) are cleaved as a signal peptide.

It is found in the periplasm. Its function is as follows. This protein maintains pilus integrity and thus is an important participant in pilus assembly. It may function as molecular chaperone directly or indirectly in the correct assembly of PapA subunits. The sequence is that of Protein PrsJ (prsJ) from Escherichia coli.